Consider the following 87-residue polypeptide: uncharacterized protein (87 aa).

Helical transmembrane passes span 10–30 and 43–63; these read VAFT…FSIG and GYYI…QKVT.

The protein resides in the cell membrane. This is an uncharacterized protein from Bacillus subtilis (strain 168).